A 471-amino-acid polypeptide reads, in one-letter code: Tryptophanase (471 aa).

Lysine 5, lysine 115, and lysine 156 each carry N6-acetyllysine. Lysine 270 is subject to N6-(pyridoxal phosphate)lysine. N6-acetyllysine is present on lysine 450.

This sequence belongs to the beta-eliminating lyase family. As to quaternary structure, homotetramer. Pyridoxal 5'-phosphate is required as a cofactor.

It carries out the reaction L-tryptophan + H2O = indole + pyruvate + NH4(+). The protein operates within amino-acid degradation; L-tryptophan degradation via pyruvate pathway; indole and pyruvate from L-tryptophan: step 1/1. The sequence is that of Tryptophanase from Shigella boydii serotype 18 (strain CDC 3083-94 / BS512).